The sequence spans 98 residues: MSQYNQPPVGVPPPQGYPPEGYPKDAYPPQGYPPQGYPQQGYPPQGYPQQGYPQQGYPPPYAPQYPPPPQHQQQQSSPGFLEGCLAALCCCCLLDACF.

The interval Met1–Ser77 is disordered. Pro residues predominate over residues Val9–Gly21. Over residues Tyr37–Gln55 the composition is skewed to low complexity. Over residues Gly56–Gln70 the composition is skewed to pro residues. The helical transmembrane segment at Gln75–Cys92 threads the bilayer.

The protein belongs to the CYSTM1 family. In terms of tissue distribution, expressed in floral organ primordia.

Its subcellular location is the membrane. In terms of biological role, required for the promotion of megasporogenesis, or promotion of germ cell formation from somatic precursor cells. Acts redundantly with WIH1. Functions in a genetic pathway downstream of SPL/NZZ and WUS and together with TRN2 in promoting megasporogenesis. This is Cysteine-rich and transmembrane domain-containing protein WIH2 from Arabidopsis thaliana (Mouse-ear cress).